A 315-amino-acid polypeptide reads, in one-letter code: CRISPR-associated endonuclease Cas1 1 (315 aa).

Mn(2+) is bound by residues Glu-144, His-208, and Glu-223.

The protein belongs to the CRISPR-associated endonuclease Cas1 family. In terms of assembly, homodimer, forms a heterotetramer with a Cas2 homodimer. Mg(2+) serves as cofactor. Requires Mn(2+) as cofactor.

Its function is as follows. CRISPR (clustered regularly interspaced short palindromic repeat), is an adaptive immune system that provides protection against mobile genetic elements (viruses, transposable elements and conjugative plasmids). CRISPR clusters contain spacers, sequences complementary to antecedent mobile elements, and target invading nucleic acids. CRISPR clusters are transcribed and processed into CRISPR RNA (crRNA). Acts as a dsDNA endonuclease. Involved in the integration of spacer DNA into the CRISPR cassette. The polypeptide is CRISPR-associated endonuclease Cas1 1 (Thermus thermophilus (strain ATCC 27634 / DSM 579 / HB8)).